An 83-amino-acid chain; its full sequence is Evasin P1090 (83 aa).

Residues 1 to 24 (MEVKIFAFLQIAVLIAFSLHLASA) form the signal peptide. 3 disulfides stabilise this stretch: Cys-44-Cys-63, Cys-48-Cys-65, and Cys-59-Cys-76. A glycan (N-linked (GlcNAc...) asparagine) is linked at Asn-47. N-linked (GlcNAc...) asparagine glycosylation occurs at Asn-70.

The protein resides in the secreted. Salivary chemokine-binding protein which binds to host chemokines CXCL1, CXCL2, CXCL3, CXCL5, CXCL6, CXCL10, CXCL11 and CXCL13. The sequence is that of Evasin P1090 from Ixodes ricinus (Common tick).